The following is a 626-amino-acid chain: SHC-transforming protein 4 (626 aa).

Residues methionine 1 to leucine 185 are CH2. 2 disordered regions span residues isoleucine 38 to serine 76 and leucine 119 to leucine 182. Over residues glutamine 120–arginine 139 the composition is skewed to polar residues. One can recognise a PID domain in the interval leucine 186–aspartate 369. Residues histidine 370–glutamate 521 are CH1. Tyrosine 422 carries the post-translational modification Phosphotyrosine. Residues cysteine 522–isoleucine 613 enclose the SH2 domain.

As to quaternary structure, interacts (via PID domain) with phosphorylated MUSK (via NPXY motif); undergoes tyrosine phosphorylation downstream of activated MUSK. Interacts with GRB2; the interaction is dependent of Tyr-422 phosphorylation and increased by EGF. In terms of processing, phosphorylated; the phosphorylation is enhanced by EGF. Phosphorylation at Tyr-422 is required for the interaction with GRB2. As to expression, expressed in both brain and skeletal muscle; widely expressed in brain namely olfactory bulb, cortex, hippocampus, striatum, thalamus, and brain stem (at protein level). Only expressed in melanomas. Weakly expressed in normal melanocytes and benign nevi. Highly expressed at the transition from radial growth phase to vertical growth phase and metastatic melanomas, when tumor cells acquire migratory competence and invasive potential.

The protein localises to the postsynaptic cell membrane. Functionally, activates both Ras-dependent and Ras-independent migratory pathways in melanomas. Contributes to the early phases of agrin-induced tyrosine phosphorylation of CHRNB1. This Mus musculus (Mouse) protein is SHC-transforming protein 4 (Shc4).